Here is a 296-residue protein sequence, read N- to C-terminus: Acetylglutamate kinase (296 aa).

Substrate-binding positions include 69-70 (GG), arginine 91, and asparagine 193.

The protein belongs to the acetylglutamate kinase family. ArgB subfamily.

Its subcellular location is the cytoplasm. The catalysed reaction is N-acetyl-L-glutamate + ATP = N-acetyl-L-glutamyl 5-phosphate + ADP. Its pathway is amino-acid biosynthesis; L-arginine biosynthesis; N(2)-acetyl-L-ornithine from L-glutamate: step 2/4. In terms of biological role, catalyzes the ATP-dependent phosphorylation of N-acetyl-L-glutamate. The chain is Acetylglutamate kinase from Delftia acidovorans (strain DSM 14801 / SPH-1).